The primary structure comprises 644 residues: Neurofilament medium polypeptide (644 aa).

The coil 1B stretch occupies residues 1 to 33 (VKVELDKKVQSLQDEVAFLRTNHEEEVADLLAQ). The region spanning 1–197 (VKVELDKKVQ…KLLEGEETRF (197 aa)) is the IF rod domain. Ser11 bears the Phosphoserine mark. The linker 12 stretch occupies residues 34 to 50 (IQASHITVERKDYLKTD). The interval 51-72 (ISSALKEIRSQLECHSDQNMHQ) is coil 2A. Positions 73-76 (AEEW) are linker 2. The coil 2B stretch occupies residues 77–197 (FKCRYAKLTE…KLLEGEETRF (121 aa)). Residue Tyr105 is modified to Phosphotyrosine. Residues Ser131, Ser203, and Ser215 each carry the phosphoserine modification. Residues 198–643 (STFSGSITGP…HAIVKEVTQS (446 aa)) are tail. Thr217 carries O-linked (GlcNAc) threonine glycosylation. 2 positions are modified to phosphoserine: Ser253 and Ser269. The disordered stretch occupies residues 270–582 (VKEEEKEEEA…GGDRSEEKVV (313 aa)). Over residues 274-292 (EKEEEAEGKEEEQEAEEEV) the composition is skewed to acidic residues. Ser298 is subject to Phosphoserine. Residues 308-328 (KEEEGEKEEEGQEEEEEEEDE) are compositionally biased toward acidic residues. A compositionally biased stretch (basic and acidic residues) spans 329–350 (GVKSDQAEEGGSEKEGSSKNEG). Phosphoserine is present on residues Ser332, Ser340, Ser345, and Ser346. The span at 351–368 (EQEEGETEAEGEVEEAEA) shows a compositional bias: acidic residues. A Phosphothreonine modification is found at Thr357. Basic and acidic residues predominate over residues 369-400 (KEEKKTEEKSEEVAAKEEPVTEAKVGKPEKAK). Phosphoserine occurs at positions 401, 406, 442, and 465. The segment covering 422-470 (GEQKEEEEKVEEEKKKAAKESPKEEKVEKKEEKPKDVPKKKAESPVKEE) has biased composition (basic and acidic residues). The span at 474–483 (EAATITKPTK) shows a compositional bias: low complexity. A compositionally biased stretch (basic and acidic residues) spans 485–508 (GLEKETKEGEKPLQQEKEKEKAGE). A phosphoserine mark is found at Ser512, Ser550, and Ser566. Positions 545-557 (TKEKGSGREEEKG) are enriched in basic and acidic residues. Over residues 568–582 (ADEKKGGDRSEEKVV) the composition is skewed to basic and acidic residues.

Belongs to the intermediate filament family. Forms heterodimers with NEFL; which can further hetero-oligomerize (in vitro). Forms heterodimers with INA (in vitro). Post-translationally, there are a number of repeats of the tripeptide K-S-P, NFM is phosphorylated on a number of the serines in this motif. It is thought that phosphorylation of NFM results in the formation of interfilament cross bridges that are important in the maintenance of axonal caliber. Phosphorylation seems to play a major role in the functioning of the larger neurofilament polypeptides (NF-M and NF-H), the levels of phosphorylation being altered developmentally and coincidentally with a change in the neurofilament function. In terms of processing, phosphorylated in the head and rod regions by the PKC kinase PKN1, leading to the inhibition of polymerization.

It is found in the cytoplasm. It localises to the cytoskeleton. Its subcellular location is the cell projection. The protein resides in the axon. Functionally, neurofilaments usually contain three intermediate filament proteins: NEFL, NEFM, and NEFH which are involved in the maintenance of neuronal caliber. May additionally cooperate with the neuronal intermediate filament proteins PRPH and INA to form neuronal filamentous networks. This is Neurofilament medium polypeptide (NEFM) from Oryctolagus cuniculus (Rabbit).